The following is an 872-amino-acid chain: FHIP family protein CBG19667 (872 aa).

The disordered stretch occupies residues 800 to 841; the sequence is SRSSPRSADEHDSTLFYGRSTIPPPGRKPLLREPSHQETLDD. Positions 829-841 are enriched in basic and acidic residues; that stretch reads LLREPSHQETLDD.

The protein belongs to the FHIP family.

The polypeptide is FHIP family protein CBG19667 (Caenorhabditis briggsae).